The following is an 832-amino-acid chain: FAST kinase domain-containing protein 1, mitochondrial (832 aa).

The region spanning 765-825 (VAIEFLDSKA…KDAWIDYLRK (61 aa)) is the RAP domain.

The protein belongs to the FAST kinase family.

It is found in the mitochondrion. Functionally, may regulate the stability of some mitochondrial mRNA species. In Xenopus tropicalis (Western clawed frog), this protein is FAST kinase domain-containing protein 1, mitochondrial (fastkd1).